The sequence spans 310 residues: Methionyl-tRNA formyltransferase (310 aa).

Serine 110–proline 113 provides a ligand contact to (6S)-5,6,7,8-tetrahydrofolate.

This sequence belongs to the Fmt family.

The enzyme catalyses L-methionyl-tRNA(fMet) + (6R)-10-formyltetrahydrofolate = N-formyl-L-methionyl-tRNA(fMet) + (6S)-5,6,7,8-tetrahydrofolate + H(+). Functionally, attaches a formyl group to the free amino group of methionyl-tRNA(fMet). The formyl group appears to play a dual role in the initiator identity of N-formylmethionyl-tRNA by promoting its recognition by IF2 and preventing the misappropriation of this tRNA by the elongation apparatus. This is Methionyl-tRNA formyltransferase from Streptomyces griseus subsp. griseus (strain JCM 4626 / CBS 651.72 / NBRC 13350 / KCC S-0626 / ISP 5235).